We begin with the raw amino-acid sequence, 447 residues long: UDP-glycosyltransferase 76E5 (447 aa).

Residues S272, A324–Q326, H341–E349, and N363–Q366 contribute to the UDP-alpha-D-glucose site.

Belongs to the UDP-glycosyltransferase family.

This chain is UDP-glycosyltransferase 76E5 (UGT76E5), found in Arabidopsis thaliana (Mouse-ear cress).